A 354-amino-acid polypeptide reads, in one-letter code: Ornithine carbamoyltransferase, catabolic (354 aa).

Residues 67 to 70 (STRT), Q94, R118, and 145 to 148 (HPTQ) contribute to the carbamoyl phosphate site. Residues N177, D241, and 245–246 (SM) contribute to the L-ornithine site. Residues 284-285 (CL) and R329 contribute to the carbamoyl phosphate site.

This sequence belongs to the aspartate/ornithine carbamoyltransferase superfamily. OTCase family.

Its subcellular location is the cytoplasm. The enzyme catalyses carbamoyl phosphate + L-ornithine = L-citrulline + phosphate + H(+). The protein operates within amino-acid degradation; L-arginine degradation via ADI pathway; carbamoyl phosphate from L-arginine: step 2/2. Its function is as follows. Reversibly catalyzes the transfer of the carbamoyl group from carbamoyl phosphate (CP) to the N(epsilon) atom of ornithine (ORN) to produce L-citrulline. This is Ornithine carbamoyltransferase, catabolic (arcB) from Lactococcus lactis subsp. cremoris (strain MG1363).